A 446-amino-acid chain; its full sequence is Rhoptry surface protein CERLI1 (446 aa).

Positions 39–208 (KPIGQLYRLM…NQTKNNEKIE (170 aa)) constitute a C2 domain. The region spanning 252–363 (GYLLHSNFYI…ILVSNYKRER (112 aa)) is the PH domain.

The protein localises to the cytoplasmic vesicle. It localises to the secretory vesicle. It is found in the rhoptry membrane. Essential for merozoite invasion of host cells by controlling rhoptry secretion. Binds to phosphatidic acid (PA) and phosphatidylinositol 4,5-bisphosphate (PIP2) lipids and thus, likely contributes to the assembly of the machinery that docks or primes the rhoptry to the parasite cell membrane prior to the fusion with the host cell membrane. This chain is Rhoptry surface protein CERLI1, found in Plasmodium falciparum (isolate 3D7).